We begin with the raw amino-acid sequence, 264 residues long: Glutamate racemase (264 aa).

Substrate contacts are provided by residues 10-11 (DS) and 42-43 (YG). The Proton donor/acceptor role is filled by cysteine 73. Position 74–75 (74–75 (NT)) interacts with substrate. Cysteine 183 acts as the Proton donor/acceptor in catalysis. 184-185 (TH) is a substrate binding site.

This sequence belongs to the aspartate/glutamate racemases family.

The catalysed reaction is L-glutamate = D-glutamate. It functions in the pathway cell wall biogenesis; peptidoglycan biosynthesis. Provides the (R)-glutamate required for cell wall biosynthesis. This is Glutamate racemase from Streptococcus pyogenes serotype M2 (strain MGAS10270).